Reading from the N-terminus, the 562-residue chain is Tissue-type plasminogen activator (562 aa).

Residues 1 to 22 (MDAMKRGLCCVLLLCGAVFVSP) form the signal peptide. Positions 23–32 (SQEIHARFRR) are excised as a propeptide. Positions 33–35 (GAR) are cleaved as a propeptide — removed by plasmin. The Fibronectin type-I domain occupies 39 to 81 (VICRDEKTQMIYQQHQSWLRPVLRSNRVEYCWCNSGRAQCHSV). Disulfide bonds link Cys-41/Cys-71, Cys-69/Cys-78, Cys-86/Cys-97, Cys-91/Cys-108, Cys-110/Cys-119, Cys-127/Cys-208, Cys-148/Cys-190, Cys-179/Cys-203, Cys-215/Cys-296, Cys-236/Cys-278, Cys-267/Cys-291, Cys-299/Cys-430, Cys-342/Cys-358, Cys-350/Cys-419, Cys-444/Cys-519, Cys-476/Cys-492, and Cys-509/Cys-537. Residues 42–52 (RDEKTQMIYQQ) form an important for binding to annexin A2 region. Residues 82–120 (PVKSCSEPRCFNGGTCQQALYFSDFVCQCPEGFAGKCCE) enclose the EGF-like domain. Residue Thr-96 is glycosylated (O-linked (Fuc) threonine). 2 consecutive Kringle domains span residues 127-208 (CYED…TPAC) and 215-296 (CYFG…VPSC). N-linked (GlcNAc...) asparagine glycosylation occurs at Asn-152. A glycan (N-linked (GlcNAc...) asparagine; partial) is linked at Asn-219. In terms of domain architecture, Peptidase S1 spans 311 to 561 (IKGGLFADIA…YLDWIRDNMR (251 aa)). Residues His-357 and Asp-406 each act as charge relay system in the active site. The N-linked (GlcNAc...) asparagine glycan is linked to Asn-483. Ser-513 acts as the Charge relay system in catalysis.

This sequence belongs to the peptidase S1 family. As to quaternary structure, heterodimer of chain A and chain B held by a disulfide bond. Forms a heterodimer with SERPINA5. Binds to fibrin with high affinity. This interaction leads to an increase in the catalytic efficiency of the enzyme between 100-fold and 1000-fold, due to an increase in affinity for plasminogen. Similarly, binding to heparin increases the activation of plasminogen. Binds to annexin A2, cytokeratin-8, fibronectin and laminin. Binds to mannose receptor and the low-density lipoprotein receptor-related protein (LRP1); these proteins are involved in TPA clearance. Yet unidentified interactions on endothelial cells and vascular smooth muscle cells (VSMC) lead to a 100-fold stimulation of plasminogen activation. In addition, binding to VSMC reduces TPA inhibition by PAI-1 by 30-fold. Binds LRP1B; binding is followed by internalization and degradation. Interacts with SERPINE1. In complex with SERPINE1, interacts with SORL1. Interacts with apyrase from Anopheles gambiae saliva; the interaction results in PLAT activation probably via an allosteric activation mechanism. Post-translationally, the single chain, almost fully active enzyme, can be further processed into a two-chain fully active form by a cleavage after Arg-310 catalyzed by plasmin, tissue kallikrein or factor Xa. Differential cell-specific N-linked glycosylation gives rise to two glycoforms, type I (glycosylated at Asn-219) and type II (not glycosylated at Asn-219). The single chain type I glycoform is less readily converted into the two-chain form by plasmin, and the two-chain type I glycoform has a lower activity than the two-chain type II glycoform in the presence of fibrin. In terms of processing, N-glycosylation of Asn-152; the bound oligomannosidic glycan is involved in the interaction with the mannose receptor. Post-translationally, characterization of O-linked glycan was studied in Bowes melanoma cell line. As to expression, synthesized in numerous tissues (including tumors) and secreted into most extracellular body fluids, such as plasma, uterine fluid, saliva, gingival crevicular fluid, tears, seminal fluid, and milk.

It is found in the secreted. Its subcellular location is the extracellular space. It catalyses the reaction Specific cleavage of Arg-|-Val bond in plasminogen to form plasmin.. Inhibited by SERPINA5. Inhibited by SERPINE1. Functionally, converts the abundant, but inactive, zymogen plasminogen to plasmin by hydrolyzing a single Arg-Val bond in plasminogen. By controlling plasmin-mediated proteolysis, it plays an important role in tissue remodeling and degradation, in cell migration and many other physiopathological events. During oocyte activation, plays a role in cortical granule reaction in the zona reaction, which contributes to the block to polyspermy. This is Tissue-type plasminogen activator from Homo sapiens (Human).